Here is a 366-residue protein sequence, read N- to C-terminus: Chorismate synthase (366 aa).

Residues arginine 48 and arginine 54 each contribute to the NADP(+) site. FMN contacts are provided by residues 125 to 127 (RSS), 238 to 239 (NA), glycine 278, 293 to 297 (KPTSS), and arginine 319.

It belongs to the chorismate synthase family. Homotetramer. The cofactor is FMNH2.

It catalyses the reaction 5-O-(1-carboxyvinyl)-3-phosphoshikimate = chorismate + phosphate. Its pathway is metabolic intermediate biosynthesis; chorismate biosynthesis; chorismate from D-erythrose 4-phosphate and phosphoenolpyruvate: step 7/7. In terms of biological role, catalyzes the anti-1,4-elimination of the C-3 phosphate and the C-6 proR hydrogen from 5-enolpyruvylshikimate-3-phosphate (EPSP) to yield chorismate, which is the branch point compound that serves as the starting substrate for the three terminal pathways of aromatic amino acid biosynthesis. This reaction introduces a second double bond into the aromatic ring system. The protein is Chorismate synthase of Herminiimonas arsenicoxydans.